Here is a 345-residue protein sequence, read N- to C-terminus: S-adenosylmethionine:tRNA ribosyltransferase-isomerase (345 aa).

Belongs to the QueA family. In terms of assembly, monomer.

Its subcellular location is the cytoplasm. The catalysed reaction is 7-aminomethyl-7-carbaguanosine(34) in tRNA + S-adenosyl-L-methionine = epoxyqueuosine(34) in tRNA + adenine + L-methionine + 2 H(+). The protein operates within tRNA modification; tRNA-queuosine biosynthesis. Functionally, transfers and isomerizes the ribose moiety from AdoMet to the 7-aminomethyl group of 7-deazaguanine (preQ1-tRNA) to give epoxyqueuosine (oQ-tRNA). The protein is S-adenosylmethionine:tRNA ribosyltransferase-isomerase of Helicobacter acinonychis (strain Sheeba).